The following is an 842-amino-acid chain: Elongation factor G, mitochondrial (842 aa).

The transit peptide at 1–58 (MVAIPRVAAARSLARQLARQSLRTTSFASAPVRIAIASTPLARSPSSFRSLSSSTRRS) directs the protein to the mitochondrion. In terms of domain architecture, tr-type G spans 93–398 (VRQRNVGISA…GVCSYLPNPA (306 aa)). GTP-binding positions include 102–109 (AHIDSGKT), 196–200 (DTPGH), and 250–253 (NKMD). The disordered stretch occupies residues 423 to 442 (AGEDQEAAAEARKNAAPPVL).

The protein belongs to the TRAFAC class translation factor GTPase superfamily. Classic translation factor GTPase family. EF-G/EF-2 subfamily.

It localises to the mitochondrion. It functions in the pathway protein biosynthesis; polypeptide chain elongation. Its function is as follows. Mitochondrial GTPase that catalyzes the GTP-dependent ribosomal translocation step during translation elongation. During this step, the ribosome changes from the pre-translocational (PRE) to the post-translocational (POST) state as the newly formed A-site-bound peptidyl-tRNA and P-site-bound deacylated tRNA move to the P and E sites, respectively. Catalyzes the coordinated movement of the two tRNA molecules, the mRNA and conformational changes in the ribosome. In Mycosarcoma maydis (Corn smut fungus), this protein is Elongation factor G, mitochondrial.